The following is a 132-amino-acid chain: NADH-quinone oxidoreductase subunit A (132 aa).

3 consecutive transmembrane segments (helical) span residues 7–27 (YWVL…MIGV), 62–82 (FYLI…LYAW), and 91–111 (WTGY…LAYL).

It belongs to the complex I subunit 3 family. In terms of assembly, NDH-1 is composed of 14 different subunits. Subunits NuoA, H, J, K, L, M, N constitute the membrane sector of the complex.

The protein resides in the cell inner membrane. It carries out the reaction a quinone + NADH + 5 H(+)(in) = a quinol + NAD(+) + 4 H(+)(out). In terms of biological role, NDH-1 shuttles electrons from NADH, via FMN and iron-sulfur (Fe-S) centers, to quinones in the respiratory chain. The immediate electron acceptor for the enzyme in this species is believed to be ubiquinone. Couples the redox reaction to proton translocation (for every two electrons transferred, four hydrogen ions are translocated across the cytoplasmic membrane), and thus conserves the redox energy in a proton gradient. The sequence is that of NADH-quinone oxidoreductase subunit A from Acidiphilium cryptum (strain JF-5).